Reading from the N-terminus, the 355-residue chain is Homeobox protein knotted-1-like 12 (355 aa).

Disordered regions lie at residues 52–82 (AAGP…GGGE) and 207–233 (ECVG…PRAE). Positions 60 to 75 (GHGHPHHGGGHHHSKH) are enriched in basic residues. Residues 218–233 (PSGRENEPPEIDPRAE) are compositionally biased toward basic and acidic residues. Residues 236–256 (ELKFQLLKKYSGYLSSLRQEF) enclose the ELK domain. A DNA-binding region (homeobox; TALE-type) is located at residues 257 to 320 (SKKKKKGKLP…NQRKRHWKPS (64 aa)).

This sequence belongs to the TALE/KNOX homeobox family. In terms of tissue distribution, expressed in stems, rachis and inflorescence.

The protein resides in the nucleus. Probable transcription factor that may be involved in shoot formation during embryogenesis. This Oryza sativa subsp. japonica (Rice) protein is Homeobox protein knotted-1-like 12 (OSH15).